We begin with the raw amino-acid sequence, 401 residues long: Probable sodium/metabolite cotransporter BASS1, chloroplastic (401 aa).

Residues 1–70 constitute a chloroplast transit peptide; that stretch reads MASAISLSLL…RRSRFDFVPR (70 aa). A run of 9 helical transmembrane segments spans residues 92-112, 122-142, 156-176, 187-207, 212-232, 247-267, 278-298, 311-331, and 371-391; these read FVGEAVSTAFPIWVSLGCLLG, VTPNWTIVGLTITMLGMGMTL, ELFAGFLLQYSVMPLSAFFVS, AGLILVGCCPGGTASNIVTYI, VALSVLMTAASTVSAVIMTPL, LGLLMSTLQVVLLPVLAGAFL, VSPVMPPIAVGTVAILCGYAI, QVVLASCLLHISGFLFGYLFS, and VPCAVSSVCHSILGSVLAGIW.

It belongs to the bile acid:sodium symporter (BASS) (TC 2.A.28) family.

It localises to the membrane. Its subcellular location is the plastid. It is found in the chloroplast envelope. May function as sodium-coupled metabolite transporter across the chloroplast envelope. This is Probable sodium/metabolite cotransporter BASS1, chloroplastic (BASS1) from Arabidopsis thaliana (Mouse-ear cress).